Consider the following 234-residue polypeptide: Large ribosomal subunit protein uL1 (234 aa).

It belongs to the universal ribosomal protein uL1 family. Part of the 50S ribosomal subunit.

Functionally, binds directly to 23S rRNA. The L1 stalk is quite mobile in the ribosome, and is involved in E site tRNA release. In terms of biological role, protein L1 is also a translational repressor protein, it controls the translation of the L11 operon by binding to its mRNA. The sequence is that of Large ribosomal subunit protein uL1 from Psychromonas ingrahamii (strain DSM 17664 / CCUG 51855 / 37).